The sequence spans 99 residues: Small ribosomal subunit protein uS19 (99 aa).

The tract at residues 77–99 (TRTFHGHSGDKKAKVAKGGPGGR) is disordered.

Belongs to the universal ribosomal protein uS19 family.

Protein S19 forms a complex with S13 that binds strongly to the 16S ribosomal RNA. The chain is Small ribosomal subunit protein uS19 from Sorangium cellulosum (strain So ce56) (Polyangium cellulosum (strain So ce56)).